A 408-amino-acid chain; its full sequence is Multidrug resistance protein MdtG (408 aa).

Helical transmembrane passes span 16–36, 58–78, 92–112, 115–135, 146–166, 173–193, 224–244, 253–273, 290–310, 319–339, and 378–398; these read LIVAWLGCFLTGAAFSLVMPF, IVFSITFLFSAIASPFWGGLA, LGMGIVMILMGMAQNIWQFLI, ALLGLLGGFVPNANALIATQV, TLSTGGVSGALLGPLAGGLLA, PVFFITASVLMLCFVVTLLCI, LFVTTMIIQIASGSIAPILTL, VGNIAFISGMIASVPGVAALL, ILIAALIFSVLLLIPMSFVQT, FLLGAADGALLPAVQTLLVYN, and AVFLVTACVVLFNIIYSWNSL.

It belongs to the major facilitator superfamily. DHA1 family. MdtG (TC 2.A.1.2.20) subfamily.

The protein localises to the cell inner membrane. Confers resistance to fosfomycin and deoxycholate. The chain is Multidrug resistance protein MdtG from Escherichia fergusonii (strain ATCC 35469 / DSM 13698 / CCUG 18766 / IAM 14443 / JCM 21226 / LMG 7866 / NBRC 102419 / NCTC 12128 / CDC 0568-73).